A 1377-amino-acid chain; its full sequence is MKEIKDFERIKIKIASPDQIRNWSYGEVKKSETINYRTLRPEKDGLFCERIFGTTKEWECYCGKFKSVRYKGIICDRCNVEVTHFKVRRERMGHIELAAPVAHIWYYKYIPSRIGLLLDITASSLNSILYYEKYVVIEPGDTDLKKMQLLNEDEYIEARERYGMSFNASMGAEAIKTLLENLDLDELSSKLRIQMIDKDDKTDKKLLRRLEIIENFKISGNKPEWMIMEVLPVIPPEIRPMVQLDGGRFATSDLNDLYRRVINRNNRLRKLLLLNAPEIIVRNEKRMLQESVDSLFDNSHKRKVVKGSSSRPLKSLSDALKGKQGRFRQNLLGKRVDYSGRSVIVVGPELKLHQCGLPAKMALELFKPFVIRRLIESEAVFNIKRAKNLIEQEVDEVWQILDLVIKEHPILLNRAPTLHRLGIQAFEPVLVEGKAIKLHPLVCHAYNADFDGDQMAVHVPLTPAAQAESWALMLSTNNLLNPANGHPIVFPSQDIVLGLYYLTMEKKNVIGEGKKFLNFNNVILAINNRSLDYNASIYVKIDGEYKKTTAGRVIFNEALPKGIEFVNKTLSDLELQILISKVYVVHGSSTVIEMLDIIKELGFRYATKFGCTISMSDIIVPDEKRTYVERANKEIAKIQNDYAKGVITGEERYNNVVSVWLKTNEELTNKMMEILKKDRDGFNVIYMMADSGARGSRNQIRQLAGMRGLMAKTSGDIIELPIISNFKEGLSVIEFFISTNGARKGLADTALKTADAGYLTRRLVDIAQDVVVRIEDCGTINGIKVETVKNGEEILESLKEKAVGSYSIERIKNPITGEIVLDANEEISEAKIELLEKIGIEKLVIRSVLTCEAEHGVCQKCYGRDFSKNKPVNIGEAVGIIAAQSIGQPGTQLTMRTFHIGGVAQAGSEDDKISLKNAFILNGIEGFNVRVDNGILFTRKGTLKIINVFYEEKIKNIKEIKVLDSQRVIKGIPLFIDKKGSEILSSYIGYVKLRDDNFFIVSEEQEVSLKAGTKLEIEVGDYVESGKVIGTFDPFAEPIIAEVKGKIKFKDIILGTTLKEEINTETGNVEKRITDNVFESLDPRIFIIDSSGMEVASYVLPGDAYLQVEDGQSINIGDIIAKLSKGSEKTQDITGGLPRVNDLFETRIPKNLTEMAKVSGIVQFKSIQKGKRLINILDEYGVEHKHYIPAGKHLLVRDGDVVKAGDMLCDGRINPHDVLEILGGISLQEFLLAEIQDVYRKQGVSINDKHIGVIIKQMMKKVKIVAVGDTNFVYGQKVDKHTFYEQNRKVIKQGGEPAIASPILIGVTKTSLNIDSFISAASFQETTKVLTDASIAGKIDDLRGLKENVVIGHLIPTGTGMGLYKKIKVSENIDSEV.

Cysteine 60, cysteine 62, cysteine 75, and cysteine 78 together coordinate Zn(2+). Residues aspartate 449, aspartate 451, and aspartate 453 each coordinate Mg(2+). Residues cysteine 777, cysteine 851, cysteine 858, and cysteine 861 each coordinate Zn(2+).

The protein belongs to the RNA polymerase beta' chain family. In terms of assembly, the RNAP catalytic core consists of 2 alpha, 1 beta, 1 beta' and 1 omega subunit. When a sigma factor is associated with the core the holoenzyme is formed, which can initiate transcription. The cofactor is Mg(2+). It depends on Zn(2+) as a cofactor.

It catalyses the reaction RNA(n) + a ribonucleoside 5'-triphosphate = RNA(n+1) + diphosphate. DNA-dependent RNA polymerase catalyzes the transcription of DNA into RNA using the four ribonucleoside triphosphates as substrates. The polypeptide is DNA-directed RNA polymerase subunit beta' (Borreliella burgdorferi (strain ZS7) (Borrelia burgdorferi)).